A 460-amino-acid polypeptide reads, in one-letter code: Acetyl-CoA decarbonylase/synthase complex subunit beta (460 aa).

Residues cysteine 188, cysteine 191, cysteine 277, and cysteine 279 each contribute to the [Ni-Fe-S] cluster site. The span at 402–416 (EETEPEEEEVEEAYP) shows a compositional bias: acidic residues. The interval 402-422 (EETEPEEEEVEEAYPEETPIP) is disordered.

It belongs to the CdhC family. As to quaternary structure, monomer. The ACDS complex is made up of alpha, epsilon, beta, gamma and delta chains with a probable stoichiometry of (alpha(2)epsilon(2))(4)-beta(8)-(gamma(1)delta(1))(8). The cofactor is [Ni-Fe-S] cluster.

The catalysed reaction is Co(I)-[corrinoid Fe-S protein] + acetyl-CoA + H(+) = methyl-Co(III)-[corrinoid Fe-S protein] + CO + CoA. In terms of biological role, part of a complex that catalyzes the reversible cleavage of acetyl-CoA, allowing autotrophic growth from CO(2). The alpha-epsilon complex generates CO from CO(2), while the beta subunit (this protein) combines the CO with CoA and a methyl group to form acetyl-CoA. The methyl group, which is incorporated into acetyl-CoA, is transferred to the beta subunit by a corrinoid iron-sulfur protein (the gamma-delta complex). The chain is Acetyl-CoA decarbonylase/synthase complex subunit beta from Methanothermobacter thermautotrophicus (strain ATCC 29096 / DSM 1053 / JCM 10044 / NBRC 100330 / Delta H) (Methanobacterium thermoautotrophicum).